The sequence spans 105 residues: Flagellar transcriptional regulator FlhD (105 aa).

It belongs to the FlhD family. Homodimer; disulfide-linked. Forms a heterohexamer composed of two FlhC and four FlhD subunits. Each FlhC binds a FlhD dimer, forming a heterotrimer, and a hexamer assembles by dimerization of two heterotrimers.

It is found in the cytoplasm. Its function is as follows. Functions in complex with FlhC as a master transcriptional regulator that regulates transcription of several flagellar and non-flagellar operons by binding to their promoter region. Activates expression of class 2 flagellar genes, including fliA, which is a flagellum-specific sigma factor that turns on the class 3 genes. Also regulates genes whose products function in a variety of physiological pathways. The sequence is that of Flagellar transcriptional regulator FlhD from Cupriavidus necator (strain ATCC 17699 / DSM 428 / KCTC 22496 / NCIMB 10442 / H16 / Stanier 337) (Ralstonia eutropha).